A 307-amino-acid polypeptide reads, in one-letter code: Anchor protein (307 aa).

The protein localises to the virion. Its function is as follows. Anchors indirectly the receptor binding (RBP) protein (depolymerase) to the virion. The protein is Anchor protein of Klebsiella phage KP34 (Bacteriophage KP34).